The sequence spans 82 residues: Cytochrome b559 subunit alpha (82 aa).

Residues 21–35 form a helical membrane-spanning segment; sequence VIHSITIPSLFIAGW. Residue histidine 23 participates in heme binding.

Belongs to the PsbE/PsbF family. In terms of assembly, heterodimer of an alpha subunit and a beta subunit. PSII is composed of 1 copy each of membrane proteins PsbA, PsbB, PsbC, PsbD, PsbE, PsbF, PsbH, PsbI, PsbJ, PsbK, PsbL, PsbM, PsbT, PsbX, PsbY, PsbZ, Psb30/Ycf12, at least 3 peripheral proteins of the oxygen-evolving complex and a large number of cofactors. It forms dimeric complexes. The cofactor is heme b.

It localises to the plastid. The protein resides in the chloroplast thylakoid membrane. In terms of biological role, this b-type cytochrome is tightly associated with the reaction center of photosystem II (PSII). PSII is a light-driven water:plastoquinone oxidoreductase that uses light energy to abstract electrons from H(2)O, generating O(2) and a proton gradient subsequently used for ATP formation. It consists of a core antenna complex that captures photons, and an electron transfer chain that converts photonic excitation into a charge separation. This chain is Cytochrome b559 subunit alpha, found in Stigeoclonium helveticum (Green alga).